The sequence spans 217 residues: 3,4-dihydroxy-2-butanone 4-phosphate synthase (217 aa).

Residues 37-38 (RE), Asp42, 150-154 (RRGHT), and Glu174 each bind D-ribulose 5-phosphate. Glu38 serves as a coordination point for Mg(2+). Position 153 (His153) interacts with Mg(2+).

The protein belongs to the DHBP synthase family. As to quaternary structure, homodimer. The cofactor is Mg(2+). It depends on Mn(2+) as a cofactor.

The enzyme catalyses D-ribulose 5-phosphate = (2S)-2-hydroxy-3-oxobutyl phosphate + formate + H(+). The protein operates within cofactor biosynthesis; riboflavin biosynthesis; 2-hydroxy-3-oxobutyl phosphate from D-ribulose 5-phosphate: step 1/1. Functionally, catalyzes the conversion of D-ribulose 5-phosphate to formate and 3,4-dihydroxy-2-butanone 4-phosphate. This Desulforapulum autotrophicum (strain ATCC 43914 / DSM 3382 / VKM B-1955 / HRM2) (Desulfobacterium autotrophicum) protein is 3,4-dihydroxy-2-butanone 4-phosphate synthase.